A 76-amino-acid polypeptide reads, in one-letter code: Sec-independent protein translocase protein TatA (76 aa).

The chain crosses the membrane as a helical span at residues 1–21; the sequence is MGSFSIWHWLIVLAVVLLLFG. The interval 43 to 76 is disordered; it reads MSDEDAKDDARDSGRTIDAKADETVNDVKKTTKS. The span at 50–76 shows a compositional bias: basic and acidic residues; that stretch reads DDARDSGRTIDAKADETVNDVKKTTKS.

The protein belongs to the TatA/E family. In terms of assembly, the Tat system comprises two distinct complexes: a TatABC complex, containing multiple copies of TatA, TatB and TatC subunits, and a separate TatA complex, containing only TatA subunits. Substrates initially bind to the TatABC complex, which probably triggers association of the separate TatA complex to form the active translocon.

The protein resides in the cell inner membrane. In terms of biological role, part of the twin-arginine translocation (Tat) system that transports large folded proteins containing a characteristic twin-arginine motif in their signal peptide across membranes. TatA could form the protein-conducting channel of the Tat system. The chain is Sec-independent protein translocase protein TatA from Brucella anthropi (strain ATCC 49188 / DSM 6882 / CCUG 24695 / JCM 21032 / LMG 3331 / NBRC 15819 / NCTC 12168 / Alc 37) (Ochrobactrum anthropi).